The sequence spans 691 residues: T-box transcription factor TBX2-B (691 aa).

Residues L104–D277 constitute a DNA-binding region (T-box). 2 disordered regions span residues C301–K440 and N612–K691. Positions H325 to L335 are enriched in low complexity. Basic and acidic residues-rich tracts occupy residues T340–S361, R378–G402, and S415–P433. Over residues P624–P639 the composition is skewed to low complexity. Positions S659–S684 form a coiled coil. The segment covering E678 to K691 has biased composition (basic and acidic residues).

In terms of assembly, binds DNA as a monomer.

It is found in the nucleus. Its function is as follows. Transcription factor which acts as a transcriptional repressor. May also function as a transcriptional activator. Binds to the palindromic T site 5'-TTCACACCTAGGTGTGAA-3' DNA sequence, or a half-site, which are present in the regulatory region of several genes. The protein is T-box transcription factor TBX2-B (tbx2-b) of Xenopus laevis (African clawed frog).